We begin with the raw amino-acid sequence, 75 residues long: Mitochondrial import receptor subunit TOM7-1 (75 aa).

At M1 the chain carries N-acetylmethionine. Residues M1–K28 form a disordered region. At M1–V46 the chain is on the cytoplasmic side. A helical transmembrane segment spans residues T47–P64. Topologically, residues K65–V75 are mitochondrial intermembrane.

It belongs to the Tom7 family. Forms part of the preprotein translocase complex of the outer mitochondrial membrane (TOM complex) which consists of at least 6 different proteins (TOM5, TOM6, TOM7, TOM20, TOM22/TOM9 and TOM40). Expressed in roots, flowers, young cotyledons and leaves.

It is found in the mitochondrion outer membrane. Functionally, seems to act as a modulator of the dynamics of the mitochondrial protein transport machinery. Seems to promote the dissociation of subunits of the outer membrane translocase. This Arabidopsis thaliana (Mouse-ear cress) protein is Mitochondrial import receptor subunit TOM7-1 (TOM7-1).